The primary structure comprises 621 residues: Autonomous transposable element EN-1 mosaic protein (621 aa).

Disordered regions lie at residues 1-119, 428-447, 498-530, and 549-621; these read MFRM…PPRR, YTRR…PSAR, QQPP…TSVQ, and RQPG…PPTE. Polar residues-rich tracts occupy residues 27-39 and 47-61; these read EGTT…QEQL and RGSS…TTSR. Over residues 82-102 the composition is skewed to acidic residues; sequence AAVDAEAEEAAAELDDGEETS. Positions 570–594 are enriched in low complexity; the sequence is PPRGQSQSPGLPSHSPGSGSGSHHA.

This protein has most probably three functions; the mutator (M) function, for excision and transposition; the suppressor (S) function, which inhibits residual gene activity of certain alleles in which inhibitor elements are integrated; an activator (A) function is proposed, because inactive SPM can be activated by a second SPM. The protein is Autonomous transposable element EN-1 mosaic protein of Zea mays (Maize).